A 1229-amino-acid chain; its full sequence is Chitin synthase 4 (1229 aa).

The interval 1–196 (MSLPERPGAK…IVKEGKRKEK (196 aa)) is disordered. The Cytoplasmic portion of the chain corresponds to 1-202 (MSLPERPGAK…RKEKIPEQLR (202 aa)). Positions 18-27 (SYRKSPSRRN) are enriched in basic residues. The span at 43 to 66 (GQHQRGPSVNSFAETIRSPNSNIE) shows a compositional bias: polar residues. Basic and acidic residues predominate over residues 92 to 105 (IRPERNRIDRDHPN). Over residues 137 to 150 (SGPPSGSNSASGSG) the composition is skewed to low complexity. Composition is skewed to basic and acidic residues over residues 164–177 (SGRETVAEKSDNTR) and 187–196 (IVKEGKRKEK). A helical transmembrane segment spans residues 203–223 (PPSAWNVYCAVITFWSPDFIM). Topologically, residues 224–240 (KCCGMPAKAQRRAWREK) are extracellular. Residues 241-261 (IGLISLILIIMGVVGFLTFGF) form a helical membrane-spanning segment. Residues 262 to 495 (NQAVCGGPVL…IKVGTVDTDT (234 aa)) lie on the Cytoplasmic side of the membrane. The helical transmembrane segment at 496 to 516 (VGCIAAKVVLYVSLALILSVV) threads the bilayer. Residues 517–1054 (GARFTLALIF…LCGTFCFSMQ (538 aa)) lie on the Extracellular side of the membrane. 2 disordered regions span residues 539-589 (TSQT…RSSF) and 601-648 (GAER…DPYA). Positions 568 to 581 (GDVGSSVAGASSSD) are enriched in low complexity. N-linked (GlcNAc...) asparagine glycans are attached at residues Asn608, Asn635, and Asn1030. The span at 608–648 (NKSMPTTMASQASGGYMGPSSTAYRETNESRTSFLKSDPYA) shows a compositional bias: polar residues. Residues 1055–1075 (FVIFIELIGTLVLPAAIAFTF) form a helical membrane-spanning segment. Residues 1076 to 1088 (YVVIISIINQPPQ) lie on the Cytoplasmic side of the membrane. The chain crosses the membrane as a helical span at residues 1089–1109 (IIPLVLLGLILGLPAILIIIT). Over 1110–1114 (AHSWS) the chain is Extracellular. Residues 1115-1135 (YVLWMLIYLLSLPVWNFVLPA) form a helical membrane-spanning segment. Over 1136 to 1229 (YAFWKFDDFS…QQYDEYYSDA (94 aa)) the chain is Cytoplasmic. The interval 1210-1229 (WASAPPHHHQQQYDEYYSDA) is disordered.

This sequence belongs to the chitin synthase family. Class IV subfamily.

The protein localises to the cell membrane. The catalysed reaction is [(1-&gt;4)-N-acetyl-beta-D-glucosaminyl](n) + UDP-N-acetyl-alpha-D-glucosamine = [(1-&gt;4)-N-acetyl-beta-D-glucosaminyl](n+1) + UDP + H(+). Polymerizes chitin, a structural polymer of the cell wall and septum, by transferring the sugar moiety of UDP-GlcNAc to the non-reducing end of the growing chitin polymer. Might function as a negative regulator on expression of other CHS genes. This chain is Chitin synthase 4, found in Pyricularia oryzae (strain 70-15 / ATCC MYA-4617 / FGSC 8958) (Rice blast fungus).